A 600-amino-acid polypeptide reads, in one-letter code: Integrator complex subunit 11 (600 aa).

Residues His-68, His-70, Asp-72, His-73, His-157, and Asp-178 each contribute to the Zn(2+) site. Positions 68 to 73 (HFHLDH) match the HXHXDH motif motif. Glu-203 is a catalytic residue. Lys-381 participates in a covalent cross-link: Glycyl lysine isopeptide (Lys-Gly) (interchain with G-Cter in SUMO). Zn(2+) is bound at residue His-414. Residues Lys-462 and Lys-475 each participate in a glycyl lysine isopeptide (Lys-Gly) (interchain with G-Cter in SUMO) cross-link. Positions 469–479 (LLPEAKKPRLL) match the Nuclear localization signal motif.

The protein belongs to the metallo-beta-lactamase superfamily. RNA-metabolizing metallo-beta-lactamase-like family. INTS11 subfamily. Component of the Integrator complex, composed of core subunits INTS1, INTS2, INTS3, INTS4, INTS5, INTS6, INTS7, INTS8, INTS9/RC74, INTS10, INTS11/CPSF3L, INTS12, INTS13, INTS14 and INTS15. The core complex associates with protein phosphatase 2A subunits PPP2CA and PPP2R1A, to form the Integrator-PP2A (INTAC) complex. INTS11 is part of the RNA endonuclease subcomplex, composed of INTS4, INTS9, INTS11 and inositol hexakisphosphate (InsP6). Interacts with WDR73; interaction is required for the assembly of the RNA endonuclease subcomplex in the cytoplasm. Interacts with BRAT1; interaction is required for the assembly of the RNA endonuclease subcomplex and inhibits the endonuclease activity of INTS11 before formation of mature integrator complex. Zn(2+) is required as a cofactor. Sumoylated; sumoylation regulates its subcellular location and is required for integrator complex integrity.

It localises to the nucleus. The protein localises to the cytoplasm. Its activity is regulated as follows. The RNA endonuclease activity is inhibited by BRAT1 that forms hyrogen bond and hydrophobic interactions with the active site. RNA endonuclease component of the integrator complex, a multiprotein complex that terminates RNA polymerase II (Pol II) transcription in the promoter-proximal region of genes. The integrator complex provides a quality checkpoint during transcription elongation by driving premature transcription termination of transcripts that are unfavorably configured for transcriptional elongation: the complex terminates transcription by (1) catalyzing dephosphorylation of the C-terminal domain (CTD) of Pol II subunit POLR2A/RPB1 and SUPT5H/SPT5, (2) degrading the exiting nascent RNA transcript via endonuclease activity and (3) promoting the release of Pol II from bound DNA. The integrator complex is also involved in terminating the synthesis of non-coding Pol II transcripts, such as enhancer RNAs (eRNAs), small nuclear RNAs (snRNAs), telomerase RNAs and long non-coding RNAs (lncRNAs). Within the integrator complex, INTS11 constitutes the RNA endonuclease subunit that degrades exiting nascent RNA transcripts. Mediates recruitment of cytoplasmic dynein to the nuclear envelope, probably as component of the integrator complex. This is Integrator complex subunit 11 (INTS11) from Pongo abelii (Sumatran orangutan).